We begin with the raw amino-acid sequence, 356 residues long: S-adenosylmethionine:tRNA ribosyltransferase-isomerase (356 aa).

Belongs to the QueA family. Monomer.

It is found in the cytoplasm. The catalysed reaction is 7-aminomethyl-7-carbaguanosine(34) in tRNA + S-adenosyl-L-methionine = epoxyqueuosine(34) in tRNA + adenine + L-methionine + 2 H(+). The protein operates within tRNA modification; tRNA-queuosine biosynthesis. Functionally, transfers and isomerizes the ribose moiety from AdoMet to the 7-aminomethyl group of 7-deazaguanine (preQ1-tRNA) to give epoxyqueuosine (oQ-tRNA). The polypeptide is S-adenosylmethionine:tRNA ribosyltransferase-isomerase (Xanthomonas axonopodis pv. citri (strain 306)).